The chain runs to 490 residues: Tryptophan 5-hydroxylase 2 (490 aa).

Phosphoserine is present on serine 19. The segment at 34–62 (LTLNKANSGKNDDKGNKGSSKNETATESG) is disordered. Over residues 50–62 (KGSSKNETATESG) the composition is skewed to polar residues. The ACT domain occupies 65–140 (AVVFSLKNEV…TIVTLNPPEN (76 aa)). Fe cation contacts are provided by histidine 318, histidine 323, and glutamate 363.

Belongs to the biopterin-dependent aromatic amino acid hydroxylase family. Interacts with DNAJC12. Fe(2+) is required as a cofactor.

The catalysed reaction is (6R)-L-erythro-5,6,7,8-tetrahydrobiopterin + L-tryptophan + O2 = 5-hydroxy-L-tryptophan + (4aS,6R)-4a-hydroxy-L-erythro-5,6,7,8-tetrahydrobiopterin. The protein operates within aromatic compound metabolism; serotonin biosynthesis; serotonin from L-tryptophan: step 1/2. This Macaca mulatta (Rhesus macaque) protein is Tryptophan 5-hydroxylase 2 (TPH2).